We begin with the raw amino-acid sequence, 566 residues long: Glucose-6-phosphate isomerase, cytosolic (566 aa).

Catalysis depends on glutamate 360, which acts as the Proton donor. Catalysis depends on residues histidine 391 and lysine 516.

It belongs to the GPI family. As to quaternary structure, homodimer.

Its subcellular location is the cytoplasm. It catalyses the reaction alpha-D-glucose 6-phosphate = beta-D-fructose 6-phosphate. It functions in the pathway carbohydrate degradation; glycolysis; D-glyceraldehyde 3-phosphate and glycerone phosphate from D-glucose: step 2/4. The polypeptide is Glucose-6-phosphate isomerase, cytosolic (PGIC) (Spinacia oleracea (Spinach)).